The primary structure comprises 477 residues: Cytochrome c-552 (477 aa).

The first 26 residues, 1–26 (MVRISTSISYLWGMVASLFLMMPAYS), serve as a signal peptide directing secretion. Residue histidine 94 participates in heme c binding. Residues cysteine 122, cysteine 125, and lysine 126 each coordinate heme. Positions 160, 163, 164, 209, 212, and 213 each coordinate heme c. Glutamate 215, tyrosine 216, lysine 261, and glutamine 263 together coordinate Ca(2+). Tyrosine 216 contacts substrate. Histidine 264 contributes to the substrate binding site. Histidine 275, cysteine 282, cysteine 285, histidine 286, histidine 301, cysteine 314, cysteine 317, histidine 318, and histidine 393 together coordinate heme c.

Belongs to the cytochrome c-552 family. Requires Ca(2+) as cofactor. It depends on heme c as a cofactor.

The protein localises to the periplasm. The catalysed reaction is 6 Fe(III)-[cytochrome c] + NH4(+) + 2 H2O = 6 Fe(II)-[cytochrome c] + nitrite + 8 H(+). It participates in nitrogen metabolism; nitrate reduction (assimilation). Its function is as follows. Catalyzes the reduction of nitrite to ammonia, consuming six electrons in the process. This is Cytochrome c-552 from Pectobacterium carotovorum subsp. carotovorum (strain PC1).